Consider the following 54-residue polypeptide: Relaxin (54 aa).

Glutamine 1 is modified (pyrrolidone carboxylic acid). Intrachain disulfides connect cysteine 10/cysteine 41, cysteine 22/cysteine 54, and cysteine 40/cysteine 45.

This sequence belongs to the insulin family. Heterodimer of a B chain and an A chain linked by two disulfide bonds.

Its subcellular location is the secreted. In terms of biological role, relaxin is an ovarian hormone that acts with estrogen to produce dilatation of the birth canal in many mammals. The protein is Relaxin of Balaenoptera edeni (Pigmy Bryde's whale).